The primary structure comprises 262 residues: Homeobox-leucine zipper protein HOX24 (262 aa).

Disordered stretches follow at residues 44-68 and 162-189; these read AAGR…RKRR and LNER…NSVM. The span at 46–62 shows a compositional bias: gly residues; sequence GRGGGDGDGGGGGGGGG. Positions 61–122 form a DNA-binding region, homeobox; the sequence is GGGERKRRFT…NKRARWRSKQ (62 aa). The tract at residues 121-165 is leucine-zipper; it reads KQIEHDYAALRAQYDALHARVESLRQEKLALAAQVDELRGKLNER.

It belongs to the HD-ZIP homeobox family. Class I subfamily. Expressed in roots and panicles.

The protein resides in the nucleus. Functionally, probable transcription factor. This chain is Homeobox-leucine zipper protein HOX24 (HOX24), found in Oryza sativa subsp. indica (Rice).